A 434-amino-acid chain; its full sequence is MAKIVKIAGREIIDSRGNPTVEVDVRLGDGTLGRAAVPSGASTGSREALELRDGDKKRFGGKGVLKAVSNVNDIIAPKLTGLEITKQQDIDDIMIKLDGTDFKSSLGANAVLGVSLACAKAGSNSNKLPVYEYVREIYNVKSDKYVLPVPLMNIINGGEHADNNVDLQEFMIAPVSAPTFREALRMGCEVFHGLKKVLNEKGYATGVGDEGGFAPNLKSNAQALEVICEAVKVAGYEVGRDIVFALDVAASELYENNKYTLEGEVKEKVKTSKDMIAFYGDLLKEYPIISIEDGLSESDWDGWKILTEKLKSRLQLVGDDLFVTNTKIFKDGIDKGIANSILIKVNQIGSLSETVAAVQMAYKAGYTAVMSHRSGETEDSIIADLAVALNTGQIKTGSASRTDRMCKYNQLLRIEEELGSKSAYLGKSAFSSIK.

Q168 serves as a coordination point for (2R)-2-phosphoglycerate. Catalysis depends on E210, which acts as the Proton donor. Mg(2+) is bound by residues D247, E292, and D319. Positions 344, 373, 374, and 395 each coordinate (2R)-2-phosphoglycerate. K344 acts as the Proton acceptor in catalysis.

This sequence belongs to the enolase family. The cofactor is Mg(2+).

The protein localises to the cytoplasm. The protein resides in the secreted. Its subcellular location is the cell surface. It catalyses the reaction (2R)-2-phosphoglycerate = phosphoenolpyruvate + H2O. Its pathway is carbohydrate degradation; glycolysis; pyruvate from D-glyceraldehyde 3-phosphate: step 4/5. In terms of biological role, catalyzes the reversible conversion of 2-phosphoglycerate (2-PG) into phosphoenolpyruvate (PEP). It is essential for the degradation of carbohydrates via glycolysis. This Endomicrobium trichonymphae protein is Enolase.